A 188-amino-acid polypeptide reads, in one-letter code: Elongation factor P (188 aa).

The protein belongs to the elongation factor P family.

The protein resides in the cytoplasm. It functions in the pathway protein biosynthesis; polypeptide chain elongation. Functionally, involved in peptide bond synthesis. Stimulates efficient translation and peptide-bond synthesis on native or reconstituted 70S ribosomes in vitro. Probably functions indirectly by altering the affinity of the ribosome for aminoacyl-tRNA, thus increasing their reactivity as acceptors for peptidyl transferase. The sequence is that of Elongation factor P from Mycoplasma mobile (strain ATCC 43663 / 163K / NCTC 11711) (Mesomycoplasma mobile).